Here is a 34-residue protein sequence, read N- to C-terminus: Photosystem II reaction center protein M (34 aa).

A helical transmembrane segment spans residues 7 to 27; the sequence is GFVASLMFILVPAIFLIVLYI.

This sequence belongs to the PsbM family. As to quaternary structure, PSII is composed of 1 copy each of membrane proteins PsbA, PsbB, PsbC, PsbD, PsbE, PsbF, PsbH, PsbI, PsbJ, PsbK, PsbL, PsbM, PsbT, PsbX, PsbY, PsbZ, Psb30/Ycf12, peripheral proteins PsbO, CyanoQ (PsbQ), PsbU, PsbV and a large number of cofactors. It forms dimeric complexes.

The protein resides in the cellular thylakoid membrane. One of the components of the core complex of photosystem II (PSII). PSII is a light-driven water:plastoquinone oxidoreductase that uses light energy to abstract electrons from H(2)O, generating O(2) and a proton gradient subsequently used for ATP formation. It consists of a core antenna complex that captures photons, and an electron transfer chain that converts photonic excitation into a charge separation. This subunit is found at the monomer-monomer interface. This is Photosystem II reaction center protein M from Synechococcus sp. (strain CC9605).